The primary structure comprises 823 residues: Putative ankyrin repeat domain-containing protein 20A4 (823 aa).

ANK repeat units follow at residues 66–95, 99–128, 132–161, 165–194, and 198–227; these read QHRT…QIDV, ENRT…NPNL, YGNT…HIEA, DNNT…SSHA, and LRRS…DVFA. 2 disordered regions span residues 301–343 and 356–405; these read VPEK…EVED and QTLR…NICD. The segment covering 371–384 has biased composition (basic and acidic residues); sequence EQQRHERSEKKQPQ. Coiled-coil stretches lie at residues 431-480, 565-724, and 776-806; these read KKLK…KQLE, EMIT…NNST, and FVLE…KTEV.

This is Putative ankyrin repeat domain-containing protein 20A4 from Homo sapiens (Human).